A 274-amino-acid chain; its full sequence is Large ribosomal subunit protein uL2cz/uL2cy (274 aa).

Over residues 1-15 (MAINLYKTSTPSTRN) the composition is skewed to polar residues. 2 disordered regions span residues 1–22 (MAIN…DSQV) and 225–274 (PVDH…RRSK).

The protein belongs to the universal ribosomal protein uL2 family. As to quaternary structure, part of the 50S ribosomal subunit.

Its subcellular location is the plastid. The protein resides in the chloroplast. In Lobularia maritima (Sweet alyssum), this protein is Large ribosomal subunit protein uL2cz/uL2cy (rpl2-A).